Here is a 93-residue protein sequence, read N- to C-terminus: Small ribosomal subunit protein uS19 (93 aa).

The protein belongs to the universal ribosomal protein uS19 family.

Its function is as follows. Protein S19 forms a complex with S13 that binds strongly to the 16S ribosomal RNA. This chain is Small ribosomal subunit protein uS19, found in Leptospira interrogans serogroup Icterohaemorrhagiae serovar copenhageni (strain Fiocruz L1-130).